A 455-amino-acid polypeptide reads, in one-letter code: Bifunctional protein GlmU (455 aa).

A pyrophosphorylase region spans residues 1 to 226 (MALNVVILAA…AIEVEGANNR (226 aa)). UDP-N-acetyl-alpha-D-glucosamine contacts are provided by residues 8 to 11 (LAAG), K22, Q73, 78 to 79 (GT), 100 to 102 (YGD), G137, E151, N166, and N224. D102 provides a ligand contact to Mg(2+). N224 provides a ligand contact to Mg(2+). A linker region spans residues 227–247 (VQLAQLERAYQARAAEKLMLE). Residues 248 to 455 (GANLRDPARL…WARPVKKPKS (208 aa)) form an N-acetyltransferase region. Positions 330 and 348 each coordinate UDP-N-acetyl-alpha-D-glucosamine. H360 acts as the Proton acceptor in catalysis. UDP-N-acetyl-alpha-D-glucosamine is bound by residues Y363 and N374. Residues A377, 383–384 (NY), S402, A420, and R437 contribute to the acetyl-CoA site.

This sequence in the N-terminal section; belongs to the N-acetylglucosamine-1-phosphate uridyltransferase family. In the C-terminal section; belongs to the transferase hexapeptide repeat family. In terms of assembly, homotrimer. The cofactor is Mg(2+).

Its subcellular location is the cytoplasm. The catalysed reaction is alpha-D-glucosamine 1-phosphate + acetyl-CoA = N-acetyl-alpha-D-glucosamine 1-phosphate + CoA + H(+). It carries out the reaction N-acetyl-alpha-D-glucosamine 1-phosphate + UTP + H(+) = UDP-N-acetyl-alpha-D-glucosamine + diphosphate. It functions in the pathway nucleotide-sugar biosynthesis; UDP-N-acetyl-alpha-D-glucosamine biosynthesis; N-acetyl-alpha-D-glucosamine 1-phosphate from alpha-D-glucosamine 6-phosphate (route II): step 2/2. Its pathway is nucleotide-sugar biosynthesis; UDP-N-acetyl-alpha-D-glucosamine biosynthesis; UDP-N-acetyl-alpha-D-glucosamine from N-acetyl-alpha-D-glucosamine 1-phosphate: step 1/1. It participates in bacterial outer membrane biogenesis; LPS lipid A biosynthesis. Its function is as follows. Catalyzes the last two sequential reactions in the de novo biosynthetic pathway for UDP-N-acetylglucosamine (UDP-GlcNAc). The C-terminal domain catalyzes the transfer of acetyl group from acetyl coenzyme A to glucosamine-1-phosphate (GlcN-1-P) to produce N-acetylglucosamine-1-phosphate (GlcNAc-1-P), which is converted into UDP-GlcNAc by the transfer of uridine 5-monophosphate (from uridine 5-triphosphate), a reaction catalyzed by the N-terminal domain. The chain is Bifunctional protein GlmU from Shewanella sediminis (strain HAW-EB3).